Here is a 352-residue protein sequence, read N- to C-terminus: Protein RecA (352 aa).

ATP is bound at residue 74-81 (GPESSGKT).

The protein belongs to the RecA family.

It is found in the cytoplasm. Functionally, can catalyze the hydrolysis of ATP in the presence of single-stranded DNA, the ATP-dependent uptake of single-stranded DNA by duplex DNA, and the ATP-dependent hybridization of homologous single-stranded DNAs. It interacts with LexA causing its activation and leading to its autocatalytic cleavage. The protein is Protein RecA of Ralstonia nicotianae (strain ATCC BAA-1114 / GMI1000) (Ralstonia solanacearum).